The sequence spans 199 residues: Prolactin (199 aa).

Residues cysteine 4 and cysteine 11 are joined by a disulfide bond. Residues serine 26, serine 34, and serine 90 each carry the phosphoserine modification. 2 cysteine pairs are disulfide-bonded: cysteine 58/cysteine 174 and cysteine 191/cysteine 199.

Belongs to the somatotropin/prolactin family. Interacts with PRLR.

It is found in the secreted. Prolactin acts primarily on the mammary gland by promoting lactation. The polypeptide is Prolactin (PRL) (Balaenoptera borealis (Sei whale)).